The sequence spans 351 residues: Histidinol-phosphate aminotransferase (351 aa).

Lys-213 is modified (N6-(pyridoxal phosphate)lysine).

Belongs to the class-II pyridoxal-phosphate-dependent aminotransferase family. Histidinol-phosphate aminotransferase subfamily. Homodimer. Pyridoxal 5'-phosphate is required as a cofactor.

It catalyses the reaction L-histidinol phosphate + 2-oxoglutarate = 3-(imidazol-4-yl)-2-oxopropyl phosphate + L-glutamate. The enzyme catalyses L-histidine + 2-oxoglutarate = 3-(imidazol-5-yl)pyruvate + L-glutamate. Its pathway is amino-acid biosynthesis; L-histidine biosynthesis; L-histidine from 5-phospho-alpha-D-ribose 1-diphosphate: step 7/9. The chain is Histidinol-phosphate aminotransferase from Caldanaerobacter subterraneus subsp. tengcongensis (strain DSM 15242 / JCM 11007 / NBRC 100824 / MB4) (Thermoanaerobacter tengcongensis).